A 326-amino-acid polypeptide reads, in one-letter code: Beta-ketoacyl-[acyl-carrier-protein] synthase III (326 aa).

Residues cysteine 112 and histidine 251 contribute to the active site. Positions 252 to 256 (QANSR) are ACP-binding. Asparagine 281 is an active-site residue.

This sequence belongs to the thiolase-like superfamily. FabH family. In terms of assembly, homodimer.

Its subcellular location is the cytoplasm. It carries out the reaction malonyl-[ACP] + acetyl-CoA + H(+) = 3-oxobutanoyl-[ACP] + CO2 + CoA. Its pathway is lipid metabolism; fatty acid biosynthesis. Its function is as follows. Catalyzes the condensation reaction of fatty acid synthesis by the addition to an acyl acceptor of two carbons from malonyl-ACP. Catalyzes the first condensation reaction which initiates fatty acid synthesis and may therefore play a role in governing the total rate of fatty acid production. Possesses both acetoacetyl-ACP synthase and acetyl transacylase activities. Its substrate specificity determines the biosynthesis of branched-chain and/or straight-chain of fatty acids. The chain is Beta-ketoacyl-[acyl-carrier-protein] synthase III from Clostridium botulinum (strain Kyoto / Type A2).